The chain runs to 449 residues: UDP-N-acetylmuramoylalanine--D-glutamate ligase (449 aa).

118-124 (GSNGKTT) contacts ATP.

This sequence belongs to the MurCDEF family.

It is found in the cytoplasm. The catalysed reaction is UDP-N-acetyl-alpha-D-muramoyl-L-alanine + D-glutamate + ATP = UDP-N-acetyl-alpha-D-muramoyl-L-alanyl-D-glutamate + ADP + phosphate + H(+). It functions in the pathway cell wall biogenesis; peptidoglycan biosynthesis. Cell wall formation. Catalyzes the addition of glutamate to the nucleotide precursor UDP-N-acetylmuramoyl-L-alanine (UMA). This is UDP-N-acetylmuramoylalanine--D-glutamate ligase from Leuconostoc citreum (strain KM20).